Consider the following 574-residue polypeptide: Serine hydroxymethyltransferase (574 aa).

180-182 (GHL) lines the (6S)-5,6,7,8-tetrahydrofolate pocket. N6-(pyridoxal phosphate)lysine is present on lysine 288. Residue glutamate 306 participates in (6S)-5,6,7,8-tetrahydrofolate binding.

This sequence belongs to the SHMT family. In terms of assembly, homodimer. Pyridoxal 5'-phosphate serves as cofactor.

The protein localises to the cytoplasm. The enzyme catalyses (6R)-5,10-methylene-5,6,7,8-tetrahydrofolate + glycine + H2O = (6S)-5,6,7,8-tetrahydrofolate + L-serine. Its pathway is one-carbon metabolism; tetrahydrofolate interconversion. It functions in the pathway amino-acid biosynthesis; glycine biosynthesis; glycine from L-serine: step 1/1. Functionally, catalyzes the reversible interconversion of serine and glycine with tetrahydrofolate (THF) serving as the one-carbon carrier. This reaction serves as the major source of one-carbon groups required for the biosynthesis of purines, thymidylate, methionine, and other important biomolecules. Also exhibits THF-independent aldolase activity toward beta-hydroxyamino acids, producing glycine and aldehydes, via a retro-aldol mechanism. The chain is Serine hydroxymethyltransferase from Treponema pallidum (strain Nichols).